Reading from the N-terminus, the 592-residue chain is A-type ATP synthase subunit A (592 aa).

Residue 233-240 (GPFGSGKT) coordinates ATP.

This sequence belongs to the ATPase alpha/beta chains family. Has multiple subunits with at least A(3), B(3), C, D, E, F, H, I and proteolipid K(x).

Its subcellular location is the cell membrane. It carries out the reaction ATP + H2O + 4 H(+)(in) = ADP + phosphate + 5 H(+)(out). Component of the A-type ATP synthase that produces ATP from ADP in the presence of a proton gradient across the membrane. The A chain is the catalytic subunit. This is A-type ATP synthase subunit A from Saccharolobus islandicus (strain L.S.2.15 / Lassen #1) (Sulfolobus islandicus).